The following is a 992-amino-acid chain: UPF0182 protein Mb3215c (992 aa).

7 consecutive transmembrane segments (helical) span residues 17–39 (RILI…LIDA), 59–81 (LATR…FGGL), 113–135 (LVGI…SYWA), 169–191 (LMLS…AHYI), 212–229 (LVSL…AYWL), 255–277 (VLPA…FSAI), and 284–306 (IPAI…WPLI). Residues 906-938 (PTEAAVPPSPAANPPPPASGPQPPPVTAAPPVP) are disordered. Positions 912-938 (PPSPAANPPPPASGPQPPPVTAAPPVP) are enriched in pro residues.

Belongs to the UPF0182 family.

It localises to the cell membrane. The chain is UPF0182 protein Mb3215c from Mycobacterium bovis (strain ATCC BAA-935 / AF2122/97).